A 64-amino-acid chain; its full sequence is Conotoxin reg3.16 (64 aa).

The first 19 residues, 1 to 19 (MSKLGVFLTICLLLFPLTA), serve as a signal peptide directing secretion. Positions 20–49 (LQLDGDQPADKPAQRKLKILPKRKHWTRFT) are excised as a propeptide. Cystine bridges form between C50/C64, C51/C60, and C56/C63.

It belongs to the conotoxin M superfamily. In terms of tissue distribution, expressed by the venom duct.

It localises to the secreted. The polypeptide is Conotoxin reg3.16 (Conus regius (Crown cone)).